Consider the following 265-residue polypeptide: Type II pantothenate kinase (265 aa).

Position 6–13 (6–13 (DAGGTLIK)) interacts with ATP. Glutamate 70 functions as the Proton acceptor in the catalytic mechanism. Residues threonine 99, 121–125 (GGMIQ), tyrosine 137, and serine 225 contribute to the ATP site.

The protein belongs to the type II pantothenate kinase family. In terms of assembly, homodimer.

It is found in the cytoplasm. It catalyses the reaction (R)-pantothenate + ATP = (R)-4'-phosphopantothenate + ADP + H(+). It functions in the pathway cofactor biosynthesis; coenzyme A biosynthesis; CoA from (R)-pantothenate: step 1/5. Its function is as follows. Catalyzes the phosphorylation of pantothenate (Pan), the first step in CoA biosynthesis. This is Type II pantothenate kinase from Staphylococcus saprophyticus subsp. saprophyticus (strain ATCC 15305 / DSM 20229 / NCIMB 8711 / NCTC 7292 / S-41).